The primary structure comprises 448 residues: Exodeoxyribonuclease 7 large subunit (448 aa).

This sequence belongs to the XseA family. As to quaternary structure, heterooligomer composed of large and small subunits.

The protein localises to the cytoplasm. The enzyme catalyses Exonucleolytic cleavage in either 5'- to 3'- or 3'- to 5'-direction to yield nucleoside 5'-phosphates.. Bidirectionally degrades single-stranded DNA into large acid-insoluble oligonucleotides, which are then degraded further into small acid-soluble oligonucleotides. In Shewanella baltica (strain OS223), this protein is Exodeoxyribonuclease 7 large subunit.